The primary structure comprises 766 residues: Signal transducer and activator of transcription 3.2 (766 aa).

Positions 150–162 (DVRKKVQDLEQKM) match the Essential for nuclear import motif. One can recognise an SH2 domain in the interval 580–670 (WNEGYIIGFI…DATNILVSPL (91 aa)). Serine 725 is subject to Phosphoserine; by NLK.

The protein belongs to the transcription factor STAT family. Forms a homodimer or a heterodimer with a related family member. Interacts with nlk.2. Post-translationally, phosphorylation of both tyrosine and serine residues, together with dimerization, is required for mesoderm induction.

It localises to the cytoplasm. The protein resides in the nucleus. Transcription factor that binds to target promoter sequences and activates transcription upon il6st/gp130 stimulation. Mediates ventralization of embryos, at least in part via inhibition of smad2 signaling. Required for hairy2 to induce dll1/delta1 and promote neural crest cell proliferation and differentiation. Involved in TGFbeta-mediated mesoderm induction in early embryos, acting downstream of map3k7/tak1 and nlk.2. The sequence is that of Signal transducer and activator of transcription 3.2 (stat3.2) from Xenopus laevis (African clawed frog).